A 308-amino-acid chain; its full sequence is Ribosome maturation factor RimP (308 aa).

Disordered stretches follow at residues 1–31, 94–113, and 249–308; these read MARA…AADA, EDIG…AAGG, and DLDE…EMNR. Residues 17 to 31 are compositionally biased toward low complexity; the sequence is APSRRTGGARAAADA. Gly residues predominate over residues 99-113; the sequence is DGAGGTGGSGGAAGG. Acidic residues predominate over residues 249-269; it reads DLDEGLEDDDGLEDEDDEDEY.

It belongs to the RimP family.

The protein resides in the cytoplasm. In terms of biological role, required for maturation of 30S ribosomal subunits. This chain is Ribosome maturation factor RimP, found in Parafrankia sp. (strain EAN1pec).